The sequence spans 820 residues: DNA replication helicase (820 aa).

Residue 90-97 coordinates ATP; the sequence is GTAGAGKT.

The protein belongs to the herpesviridae helicase family. In terms of assembly, associates with the primase and the primase-associated factor to form the helicase-primase complex.

The protein resides in the host nucleus. Its function is as follows. Component of the helicase/primase complex. Unwinds the DNA at the replication forks and generates single-stranded DNA for both leading and lagging strand synthesis. The primase synthesizes short RNA primers on the lagging strand that the polymerase elongates using dNTPs. Possesses helicase-like motifs and therefore may act as the helicase subunit of the complex. The sequence is that of DNA replication helicase from Human herpesvirus 7 (strain JI) (HHV-7).